Consider the following 538-residue polypeptide: Phosphoenolpyruvate carboxykinase (ATP) (538 aa).

Residues Arg-64, Tyr-205, and Lys-211 each contribute to the substrate site. Residues Lys-211, His-230, and 246–254 contribute to the ATP site; that span reads GLSGTGKTT. Residues Lys-211 and His-230 each coordinate Mn(2+). Residue Asp-267 participates in Mn(2+) binding. ATP-binding positions include Glu-295, Arg-331, 447 to 448, and Thr-453; that span reads RI. Arg-331 is a substrate binding site.

This sequence belongs to the phosphoenolpyruvate carboxykinase (ATP) family. Monomer. Mn(2+) is required as a cofactor.

Its subcellular location is the cytoplasm. It catalyses the reaction oxaloacetate + ATP = phosphoenolpyruvate + ADP + CO2. It participates in carbohydrate biosynthesis; gluconeogenesis. Functionally, involved in the gluconeogenesis. Catalyzes the conversion of oxaloacetate (OAA) to phosphoenolpyruvate (PEP) through direct phosphoryl transfer between the nucleoside triphosphate and OAA. The sequence is that of Phosphoenolpyruvate carboxykinase (ATP) from Haemophilus influenzae (strain 86-028NP).